A 474-amino-acid polypeptide reads, in one-letter code: Sialyltransferase-like protein 1 (474 aa).

The Cytoplasmic segment spans residues 1-14 (MRSHQAGRKLPLLQ). Residues 15–35 (LLGCVAVFSVFVFTIQSSFFA) traverse the membrane as a helical; Signal-anchor for type II membrane protein segment. Over 36–474 (DNNRKLDLQP…CVRHPLKLDT (439 aa)) the chain is Lumenal. N-linked (GlcNAc...) asparagine glycosylation is found at Asn-88, Asn-120, Asn-155, and Asn-243. Residues 376–421 (RLQRSQQPTSSKRDGSGQFGNCKVWGDADPTKGPVSGSPDMSETRK) are disordered.

This sequence belongs to the glycosyltransferase 29 family. Highly expressed in inflorescences and siliques and at lower levels in roots, leaves and stems.

The protein localises to the golgi apparatus membrane. Functionally, required for normal pollen grain germination and pollen tube growth. May not be required for pollen development and female gametophytic function. The protein is Sialyltransferase-like protein 1 of Arabidopsis thaliana (Mouse-ear cress).